Consider the following 286-residue polypeptide: Nucleotide-binding protein HAPS_0087 (286 aa).

An ATP-binding site is contributed by 8-15 (GRSGSGKS). 56-59 (DVRN) serves as a coordination point for GTP.

It belongs to the RapZ-like family.

Functionally, displays ATPase and GTPase activities. In Glaesserella parasuis serovar 5 (strain SH0165) (Haemophilus parasuis), this protein is Nucleotide-binding protein HAPS_0087.